A 130-amino-acid polypeptide reads, in one-letter code: Small ribosomal subunit protein uS11 (130 aa).

It belongs to the universal ribosomal protein uS11 family. Part of the 30S ribosomal subunit. Interacts with proteins S7 and S18. Binds to IF-3.

In terms of biological role, located on the platform of the 30S subunit, it bridges several disparate RNA helices of the 16S rRNA. Forms part of the Shine-Dalgarno cleft in the 70S ribosome. The sequence is that of Small ribosomal subunit protein uS11 from Campylobacter curvus (strain 525.92).